Reading from the N-terminus, the 398-residue chain is Transcription termination factor 1, mitochondrial (398 aa).

A mitochondrion-targeting transit peptide spans 1 to 57; it reads MQSLSLGQTSISKGLNYLTIMAPGNLWHMRNNFLFGSRCWMTRFSAENIFKSVSFRL. Interaction with DNA regions lie at residues 169-170, 246-250, 323-330, 354-357, and 383-390; these read RS, QSTKR, AEKKFNDK, SIST, and SKKRYEAK.

This sequence belongs to the mTERF family. Monomer. Post-translationally, phosphoprotein with mostly four phosphate groups. While the DNA-binding activity is unaffected by the phosphorylation state, only the phosphorylated form of the protein is active for termination activity. Functioning seems to be regulated by phosphorylation.

It localises to the mitochondrion. In terms of biological role, transcription termination factor. Binds to a 28 bp region within the tRNA(Leu(uur)) gene at a position immediately adjacent to and downstream of the 16S rRNA gene; this region comprises a tridecamer sequence critical for directing accurate termination. Binds DNA along the major grove and promotes DNA bending and partial unwinding. Promotes base flipping. Transcription termination activity appears to be polarized with highest specificity for transcripts initiated on the light strand. In Pongo abelii (Sumatran orangutan), this protein is Transcription termination factor 1, mitochondrial (MTERF1).